A 631-amino-acid chain; its full sequence is Pro-interleukin-16 (631 aa).

2 disordered regions span residues Glu-30–Thr-269 and Pro-317–Thr-344. Over residues Ser-132–Ser-144 the composition is skewed to low complexity. Phosphoserine is present on Ser-221. A compositionally biased stretch (polar residues) spans Ser-322–Thr-344. Residues Lys-405–Ser-501 are interaction with PPP1R12A, PPP1R12B and PPP1R12C. PDZ domains lie at His-411 to Lys-496 and Thr-533 to Lys-618.

Homotetramer. Pro-interleukin-16 interacts (via PDZ 2 domain) with PPP1R12A, PPP1R12B and PPP1R12C. Pro-interleukin-16 interacts with GRIN2A. Pro-interleukin-16 interacts with GABPB1. Pro-interleukin-16 interacts (via PDZ 3 domain) with HDAC3.

It localises to the secreted. It is found in the cytoplasm. The protein localises to the nucleus. In terms of biological role, interleukin-16 stimulates a migratory response in CD4+ lymphocytes, monocytes, and eosinophils. Primes CD4+ T-cells for IL-2 and IL-15 responsiveness. Also induces T-lymphocyte expression of interleukin 2 receptor. Ligand for CD4. Its function is as follows. Pro-interleukin-16 is involved in cell cycle progression in T-cells. Appears to be involved in transcriptional regulation of SKP2 and is probably part of a transcriptional repression complex on the core promoter of the SKP2 gene. May act as a scaffold for GABPB1 (the DNA-binding subunit the GABP transcription factor complex) and HDAC3 thus maintaining transcriptional repression and blocking cell cycle progression in resting T-cells. This is Pro-interleukin-16 (IL16) from Chlorocebus aethiops (Green monkey).